Consider the following 406-residue polypeptide: Renin (406 aa).

The N-terminal stretch at 1–23 (MDGWRRMPRWGLLLLLWGSCTFG) is a signal peptide. The propeptide at 24–66 (LPTDTTTFKRIFLKRMPSIRESLKERGVDMARLGPEWSQPMKR) is activation peptide. Asn-71 carries N-linked (GlcNAc...) asparagine glycosylation. The Peptidase A1 domain occupies 86–403 (YYGEIGIGTP…DRRNNRIGFA (318 aa)). Residue Asp-104 is part of the active site. The cysteines at positions 117 and 124 are disulfide-linked. The N-linked (GlcNAc...) asparagine glycan is linked to Asn-141. The cysteines at positions 283 and 287 are disulfide-linked. Asp-292 is a catalytic residue. The cysteines at positions 325 and 362 are disulfide-linked.

This sequence belongs to the peptidase A1 family. In terms of assembly, interacts with ATP6AP2.

The protein resides in the secreted. It localises to the membrane. It carries out the reaction Cleavage of Leu-|-Xaa bond in angiotensinogen to generate angiotensin I.. Its activity is regulated as follows. Interaction with ATP6AP2 results in a 5-fold increased efficiency in angiotensinogen processing. Its function is as follows. Renin is a highly specific endopeptidase, whose only known function is to generate angiotensin I from angiotensinogen in the plasma, initiating a cascade of reactions that produce an elevation of blood pressure and increased sodium retention by the kidney. The polypeptide is Renin (REN) (Macaca fascicularis (Crab-eating macaque)).